A 3380-amino-acid polypeptide reads, in one-letter code: Apolipophorins (3380 aa).

The N-terminal stretch at 1–21 is a signal peptide; it reads MGTPPHIWFLLILAISSGGLS. Positions 40-646 constitute a Vitellogenin domain; sequence YQKGQTYTYS…SQSSYLPRSV (607 aa). Residues asparagine 132, asparagine 649, asparagine 969, asparagine 2174, asparagine 2851, and asparagine 3177 are each glycosylated (N-linked (GlcNAc...) asparagine). The 165-residue stretch at 2815–2979 folds into the VWFD domain; the sequence is ATAILLNSHH…NAWKVDAQCA (165 aa). An intrachain disulfide couples cysteine 2839 to cysteine 2978.

Cleaved into 2 chains by furin protease. However, prevention of cleavage does not impair its function. Post-translationally, N-glycosylated. As to expression, present in brain, hemolymph, fat body and eyes.

Its subcellular location is the secreted. Functionally, constitutes the major component of lipophorin, which mediates transport for various types of lipids in hemolymph. Acts by forming lipoprotein particles that bind lipoproteins and lipids. May be required for morphogens wingless (wg) and hedgehog (hh) function, possibly by acting as vehicles for the movement of wg and hh. This Locusta migratoria (Migratory locust) protein is Apolipophorins.